Consider the following 130-residue polypeptide: MNLTYCLLVTGPHYGTEQASSAYLFAKALLEKGHHIAQVFFYREGVSNANQLVSPASDEFDLPKAWIALASRYNIPLQVCVAAALRRGVVDEQQAKEQGLLSSNMATKFELSGLGALAQAMLTCDRVVQF.

Cys-80 (cysteine persulfide intermediate) is an active-site residue.

Belongs to the DsrE/TusD family. In terms of assembly, heterohexamer, formed by a dimer of trimers. The hexameric TusBCD complex contains 2 copies each of TusB, TusC and TusD. The TusBCD complex interacts with TusE.

It localises to the cytoplasm. Functionally, part of a sulfur-relay system required for 2-thiolation of 5-methylaminomethyl-2-thiouridine (mnm(5)s(2)U) at tRNA wobble positions. Accepts sulfur from TusA and transfers it in turn to TusE. This chain is Sulfurtransferase TusD, found in Proteus mirabilis (strain HI4320).